A 239-amino-acid polypeptide reads, in one-letter code: Putative 3-methyladenine DNA glycosylase (239 aa).

The protein belongs to the DNA glycosylase MPG family.

This Pseudomonas aeruginosa (strain LESB58) protein is Putative 3-methyladenine DNA glycosylase.